The primary structure comprises 591 residues: Aspartate--tRNA(Asp/Asn) ligase (591 aa).

Glu-170 lines the L-aspartate pocket. The aspartate stretch occupies residues 194 to 197 (QLFK). Residue Arg-216 participates in L-aspartate binding. ATP is bound by residues 216-218 (RDE) and Gln-225. His-448 contacts L-aspartate. Position 482 (Glu-482) interacts with ATP. Arg-489 is a binding site for L-aspartate. 534–537 (GWDR) contributes to the ATP binding site. Residues 559 to 591 (GGVDPLTDAPAPITEQQRKESGIDVKPEPSKPH) are disordered. The segment covering 574–591 (QQRKESGIDVKPEPSKPH) has biased composition (basic and acidic residues).

Belongs to the class-II aminoacyl-tRNA synthetase family. Type 1 subfamily. As to quaternary structure, homodimer.

The protein localises to the cytoplasm. The enzyme catalyses tRNA(Asx) + L-aspartate + ATP = L-aspartyl-tRNA(Asx) + AMP + diphosphate. Its function is as follows. Aspartyl-tRNA synthetase with relaxed tRNA specificity since it is able to aspartylate not only its cognate tRNA(Asp) but also tRNA(Asn). Reaction proceeds in two steps: L-aspartate is first activated by ATP to form Asp-AMP and then transferred to the acceptor end of tRNA(Asp/Asn). The chain is Aspartate--tRNA(Asp/Asn) ligase from Mycobacterium avium (strain 104).